Consider the following 654-residue polypeptide: Phosphate transport system permease protein PstA homolog (654 aa).

Helical transmembrane passes span 22–42 (LAFL…TEAT), 64–84 (AGIW…LIIA), 113–133 (ILSG…LSIF), 143–163 (LSLL…VISL), 266–286 (VLYI…FFAI), 303–323 (ISNF…ALFV), 368–388 (ELIC…FVFI), 417–437 (LVII…IAIW), 453–473 (FVID…GLSF), 486–506 (NGTS…LFLI), 535–555 (IFKI…ILSI), and 613–633 (VVFL…LFLL). Residues 70 to 285 (LLVSFIVSIG…ILVSLLNFFA (216 aa)) form the ABC transmembrane type-1 1 domain. Residues 413 to 623 (LVNTLVIILI…VFLILLIFFS (211 aa)) enclose the ABC transmembrane type-1 2 domain.

The protein belongs to the binding-protein-dependent transport system permease family. CysTW subfamily.

It localises to the cell membrane. Could be part of a binding-protein-dependent transport system for phosphate; probably responsible for the translocation of the substrate across the membrane. The polypeptide is Phosphate transport system permease protein PstA homolog (pstA) (Mycoplasma genitalium (strain ATCC 33530 / DSM 19775 / NCTC 10195 / G37) (Mycoplasmoides genitalium)).